Consider the following 589-residue polypeptide: 3-(3-hydroxy-phenyl)propionate/3-hydroxycinnamic acid hydroxylase (589 aa).

FAD contacts are provided by residues 15-44 (DVLIIGAGPVGLTLANTLGMAGVRVIVAEK) and 283-293 (FRVDRILLAGD).

This sequence belongs to the PheA/TfdB FAD monooxygenase family. The cofactor is FAD.

It catalyses the reaction 3-(3-hydroxyphenyl)propanoate + NADH + O2 + H(+) = 3-(2,3-dihydroxyphenyl)propanoate + NAD(+) + H2O. The enzyme catalyses (2E)-3-(3-hydroxyphenyl)prop-2-enoate + NADH + O2 + H(+) = (2E)-3-(2,3-dihydroxyphenyl)prop-2-enoate + NAD(+) + H2O. The protein operates within aromatic compound metabolism; 3-phenylpropanoate degradation. In terms of biological role, catalyzes the insertion of one atom of molecular oxygen into position 2 of the phenyl ring of 3-(3-hydroxyphenyl)propionate (3-HPP) and hydroxycinnamic acid (3HCI). This chain is 3-(3-hydroxy-phenyl)propionate/3-hydroxycinnamic acid hydroxylase, found in Comamonas testosteroni (Pseudomonas testosteroni).